Consider the following 37-residue polypeptide: Large ribosomal subunit protein bL36c (37 aa).

The protein belongs to the bacterial ribosomal protein bL36 family.

It is found in the plastid. The protein localises to the chloroplast. This Cucumis sativus (Cucumber) protein is Large ribosomal subunit protein bL36c.